The sequence spans 883 residues: Protein SEY1 homolog (883 aa).

The Cytoplasmic portion of the chain corresponds to 1–795 (MQMDRKTQII…ETGGKMSLKN (795 aa)). The GB1/RHD3-type G domain occupies 33-279 (GFNYNVVAIL…IPSDGFAHYC (247 aa)). 43–50 (GSQSSGKS) contacts GTP. A coiled-coil region spans residues 673–693 (LDEIMDVLKSKLDEISDNLSS). The chain crosses the membrane as a helical span at residues 796–816 (VPLFFWVILLILGWNELLFFI). Over 817-819 (RFF) the chain is Lumenal. Residues 820 to 840 (FRLNIILPLFLAAAVILSTLF) form a helical membrane-spanning segment. Topologically, residues 841-883 (FNGNMEVLSTINKVVFFLAKSSFGFYRQLQTMGEKVAQVPTAD) are cytoplasmic.

Belongs to the TRAFAC class dynamin-like GTPase superfamily. GB1/RHD3 GTPase family. RHD3 subfamily.

It is found in the endoplasmic reticulum membrane. In terms of biological role, probable GTP-binding protein involved in generating and maintaining the structure of the tubular endoplasmic reticulum network. The protein is Protein SEY1 homolog of Plasmodium knowlesi (strain H).